A 332-amino-acid chain; its full sequence is Beta-ketoacyl-[acyl-carrier-protein] synthase III 5 (332 aa).

Residues Cys111 and His253 contribute to the active site. Positions 254 to 258 (QANAR) are ACP-binding. Residue Asn283 is part of the active site.

The protein belongs to the thiolase-like superfamily. FabH family. In terms of assembly, homodimer.

It localises to the cytoplasm. The catalysed reaction is malonyl-[ACP] + acetyl-CoA + H(+) = 3-oxobutanoyl-[ACP] + CO2 + CoA. It functions in the pathway lipid metabolism; fatty acid biosynthesis. In terms of biological role, catalyzes the condensation reaction of fatty acid synthesis by the addition to an acyl acceptor of two carbons from malonyl-ACP. Catalyzes the first condensation reaction which initiates fatty acid synthesis and may therefore play a role in governing the total rate of fatty acid production. Possesses both acetoacetyl-ACP synthase and acetyl transacylase activities. Its substrate specificity determines the biosynthesis of branched-chain and/or straight-chain of fatty acids. The chain is Beta-ketoacyl-[acyl-carrier-protein] synthase III 5 from Streptomyces coelicolor (strain ATCC BAA-471 / A3(2) / M145).